The following is a 513-amino-acid chain: Sodium/potassium/calcium exchanger 5 (513 aa).

The N-terminal stretch at 1–35 (MRTDVFLQRRKRRDVLLSIIALLLLIFAIVHLVFC) is a signal peptide. The Extracellular segment spans residues 36 to 78 (AGLSFQGSSSARVRRDLENASECVQPQSSEFPEGFFTVQERKD). The helical transmembrane segment at 79-99 (GGILIYFMIIFYMLLSVSIVC) threads the bilayer. Residues 100–123 (DEYFLPSLEVISERLGLSQDVAGA) lie on the Cytoplasmic side of the membrane. The chain crosses the membrane as a helical span at residues 124-144 (TFMAAGSSAPELVTAFLGVFV). At 145–148 (TKGD) the chain is on the extracellular side. Residues 149 to 169 (IGVSTIMGSAVYNLLCICAAC) form a helical membrane-spanning segment. At 170 to 181 (GLLSSAVGRLSC) the chain is on the cytoplasmic side. Residues 182-202 (WPLFRDCVAYAISVAAVIAII) traverse the membrane as a helical segment. Over 203 to 207 (SDNRV) the chain is Extracellular. A helical transmembrane segment spans residues 208–228 (YWYDGACLLLVYGVYVAVLCF). Over 229 to 315 (DLRISEYVMQ…KSVFSMPDHD (87 aa)) the chain is Cytoplasmic. Residues 316–336 (LKRILWVLSLPVSTLLFVSVP) traverse the membrane as a helical segment. The Extracellular segment spans residues 337–350 (DCRRPFWKNFYMLT). A helical membrane pass occupies residues 351 to 371 (FLMSAVWISAFTYVLVWMVTI). Over 372-381 (VGETLGIPDT) the chain is Cytoplasmic. Residues 382–402 (VMGMTLLAAGTSIPDTVASVM) traverse the membrane as a helical segment. The Extracellular segment spans residues 403–420 (VAREGKSDMAMSNIVGSN). A helical membrane pass occupies residues 421-441 (VFDMLCLGLPWFIQTVFVDVG). Topologically, residues 442 to 450 (SPVEVNSSG) are cytoplasmic. The chain crosses the membrane as a helical span at residues 451-471 (LVFMSCTLLLSIIFLFLAVHI). The Extracellular portion of the chain corresponds to 472–482 (NGWKLDWKLGL). The chain crosses the membrane as a helical span at residues 483 to 503 (VCLACYILFATLSILYELGII). The Cytoplasmic portion of the chain corresponds to 504 to 513 (GNNPIRSCSD).

It belongs to the Ca(2+):cation antiporter (CaCA) (TC 2.A.19) family. SLC24A subfamily. Highly expressed in melanin-producing cells. Colocalizes with melanin biosynthesis marker dct.

It is found in the golgi apparatus. Its subcellular location is the trans-Golgi network membrane. The protein resides in the melanosome. It carries out the reaction Ca(2+)(out) + K(+)(out) + 4 Na(+)(in) = Ca(2+)(in) + K(+)(in) + 4 Na(+)(out). Calcium, potassium:sodium antiporter that transports 1 Ca(2+) and 1 K(+) to the melanosome in exchange for 4 cytoplasmic Na(+). Involved in pigmentation, possibly by participating in ion transport in melanosomes. Predominant sodium-calcium exchanger in melanocytes. The sequence is that of Sodium/potassium/calcium exchanger 5 (slc24a5) from Danio rerio (Zebrafish).